Reading from the N-terminus, the 723-residue chain is Catalase-peroxidase (723 aa).

The segment at residues 96-225 is a cross-link (tryptophyl-tyrosyl-methioninium (Trp-Tyr) (with M-251)); it reads WHAAGSYRVA…LAAVMMGLIY (130 aa). His-97 functions as the Proton acceptor in the catalytic mechanism. Residues 225-251 constitute a cross-link (tryptophyl-tyrosyl-methioninium (Tyr-Met) (with W-96)); it reads YVNPEGVDGNPDPLKTAEDVRVTFARM. Position 266 (His-266) interacts with heme b.

Belongs to the peroxidase family. Peroxidase/catalase subfamily. In terms of assembly, homodimer or homotetramer. Heme b is required as a cofactor. In terms of processing, formation of the three residue Trp-Tyr-Met cross-link is important for the catalase, but not the peroxidase activity of the enzyme.

It carries out the reaction H2O2 + AH2 = A + 2 H2O. It catalyses the reaction 2 H2O2 = O2 + 2 H2O. In terms of biological role, bifunctional enzyme with both catalase and broad-spectrum peroxidase activity. This Alkalilimnicola ehrlichii (strain ATCC BAA-1101 / DSM 17681 / MLHE-1) protein is Catalase-peroxidase.